A 34-amino-acid polypeptide reads, in one-letter code: Sarcoplasmic/endoplasmic reticulum calcium ATPase regulator DWORF (34 aa).

Residues 12-32 traverse the membrane as a helical segment; it reads IVPILLLVGWIVGCIIVIYIV.

As to quaternary structure, homooligomer. Can also form heterooligomers with other sarcoplasmic/endoplasmic reticulum calcium ATPase (SERCA) regulators ARLN, ERLN, PLN and SLN. Monomer. Interacts with ATP2A1/SERCA1; the interaction results in activation of ATP2A1. Interacts as a monomer with ATP2A2/SERCA2; the interaction results in activation of ATP2A2. As to expression, highly expressed in heart (at protein level). Detected in heart and soleus, a postural muscle group of the hindlimb containing the highest enrichment of slow-twitch muscle fibers. Also expressed in diaphragm, which contains some slow-twitch fibers. Not detected in the quadriceps, a fast-twitch muscle group, or in cardiac atrial muscle. Not expressed in the prenatal heart but gradually increases in abundance postnatally.

It localises to the sarcoplasmic reticulum membrane. In terms of biological role, enhances the activity of ATP2A1/SERCA1 ATPase in sarcoplasmic reticulum by displacing ATP2A1/SERCA1 inhibitors, thereby acting as a key regulator of skeletal muscle activity. Also enhances the activity of the ATP2A2/SERCA2 ATPase. Does not directly stimulate SERCA pump activity. Binds preferentially to the phosphorylated E1 and E2 conformational forms of ATP2A2 which predominate at high Ca(2+) concentrations during the systolic phase of the cardiac cycle. Competes with ATP2A2 inhibitor phospholamban (PLN) for binding to ATP2A2 and displaces PLN. Can activate ATP2A2 directly in the absence of PLN. Also enhances sarcoplasmic reticulum Ca(2+) uptake and myocyte contractility by displacing the SERCA inhibitory peptides sarcolipin (SLN) and myoregulin (MRLN). The protein is Sarcoplasmic/endoplasmic reticulum calcium ATPase regulator DWORF of Mus musculus (Mouse).